The chain runs to 326 residues: MFISISAGVVTFLITLVGIPAFIQFYRKAQITGQQMHEDVKQHQAKAGTPTMGGLVFLIAAVVVSFLLALFSKQLTNNVGMILFILVLYGLVGFLDDFLKVFRKINEGLNPKQKLALQLLGGVIFYLFYERGGDMLSVFSYQVHLGIFYIIFALFWLVGFSNAVNLTDGIDGLASISVVISLSAYGVIAYVQGQMDILLVILAMIGGLLGFFVFNHKPAKVFMGDVGSLALGGMLAAISMALHQEWTLLIIGIVYVFETTSVMMQVSYFKLTGGKRIFRMTPVHHHFELGGLSGKGNPWSEWKVDFFFWGVGLLASLLTLAILYLM.

Helical transmembrane passes span 3-23 (ISIS…PAFI), 51-71 (TMGG…LALF), 79-99 (VGMI…DDFL), 115-135 (LALQ…GGDM), 138-158 (VFSY…FWLV), 169-189 (GIDG…GVIA), 195-215 (MDIL…FVFN), 221-243 (VFMG…MALH), and 306-326 (FFFW…LYLM).

The protein belongs to the glycosyltransferase 4 family. MraY subfamily. Requires Mg(2+) as cofactor.

It localises to the cell membrane. It carries out the reaction UDP-N-acetyl-alpha-D-muramoyl-L-alanyl-gamma-D-glutamyl-L-lysyl-D-alanyl-D-alanine + di-trans,octa-cis-undecaprenyl phosphate = Mur2Ac(oyl-L-Ala-gamma-D-Glu-L-Lys-D-Ala-D-Ala)-di-trans,octa-cis-undecaprenyl diphosphate + UMP. It functions in the pathway cell wall biogenesis; peptidoglycan biosynthesis. In terms of biological role, catalyzes the initial step of the lipid cycle reactions in the biosynthesis of the cell wall peptidoglycan: transfers peptidoglycan precursor phospho-MurNAc-pentapeptide from UDP-MurNAc-pentapeptide onto the lipid carrier undecaprenyl phosphate, yielding undecaprenyl-pyrophosphoryl-MurNAc-pentapeptide, known as lipid I. The sequence is that of Phospho-N-acetylmuramoyl-pentapeptide-transferase from Streptococcus pneumoniae (strain ATCC 700669 / Spain 23F-1).